We begin with the raw amino-acid sequence, 421 residues long: Cell division protein FtsZ (421 aa).

Residues 26 to 30 (GGGGN), 132 to 134 (GTG), Glu163, Arg167, and Asn211 contribute to the GTP site.

This sequence belongs to the FtsZ family. In terms of assembly, homodimer. Polymerizes to form a dynamic ring structure in a strictly GTP-dependent manner. Interacts directly with several other division proteins.

The protein resides in the cytoplasm. Functionally, essential cell division protein that forms a contractile ring structure (Z ring) at the future cell division site. The regulation of the ring assembly controls the timing and the location of cell division. One of the functions of the FtsZ ring is to recruit other cell division proteins to the septum to produce a new cell wall between the dividing cells. Binds GTP and shows GTPase activity. The protein is Cell division protein FtsZ of Haemophilus influenzae (strain ATCC 51907 / DSM 11121 / KW20 / Rd).